The chain runs to 444 residues: Type I restriction enzyme EcoDI specificity subunit (444 aa).

This sequence belongs to the type-I restriction system S methylase family. As to quaternary structure, the type I restriction/modification system is composed of three polypeptides R, M and S; the restriction enzyme has stoichiometry R(2)M(2)S(1) while the methyltransferase is M(2)S(1).

Its function is as follows. The specificity (S) subunit of a type I restriction enzyme; this subunit dictates DNA sequence specificity. The M and S subunits together form a methyltransferase (MTase) that methylates two adenine residues of the sequence 5'-TTAN(7)GTCY-3'. In the presence of the R subunit the complex can also act as an endonuclease, binding to the same target sequence but cutting the DNA some distance from this site. Whether the DNA is cut or modified depends on the methylation state of the target sequence. When the target site is unmodified, the DNA is cut. When the target site is hemimethylated, the complex acts as a maintenance MTase modifying the DNA so that both strands become methylated. After locating a non-methylated recognition site, the enzyme complex serves as a molecular motor that translocates DNA in an ATP-dependent manner until a collision occurs that triggers cleavage. The protein is Type I restriction enzyme EcoDI specificity subunit of Escherichia coli.